Reading from the N-terminus, the 167-residue chain is Ubiquitin-fold modifier-conjugating enzyme 1 (167 aa).

The active-site Glycyl thioester intermediate is the Cys-116.

It belongs to the ubiquitin-conjugating enzyme family. UFC1 subfamily. In terms of assembly, interacts with UBA5 (via C-terminus). Interacts with UFL1. Interacts with UFM1.

Functionally, E2-like enzyme which specifically catalyzes the second step in ufmylation. Accepts the ubiquitin-like modifier UFM1 from the E1 enzyme UBA5 and forms an intermediate with UFM1 via a thioester linkage. Ufmylation is involved in various processes, such as ribosome recycling, response to DNA damage, interferon response or reticulophagy (also called ER-phagy). This chain is Ubiquitin-fold modifier-conjugating enzyme 1, found in Osmerus mordax (Rainbow smelt).